The sequence spans 67 residues: Prokaryotic ubiquitin-like protein Pup (67 aa).

Over residues 1–11 (MAGQEQQQPQS) the composition is skewed to low complexity. A disordered region spans residues 1–47 (MAGQEQQQPQSRESEFEDDAPATPPAPGEAQASAATQGVDDLLDEID). An ARC ATPase binding region spans residues 25–61 (PAPGEAQASAATQGVDDLLDEIDGVLESNAEEFVRAF). Position 67 is a deamidated glutamine (Gln67). Gln67 participates in a covalent cross-link: Isoglutamyl lysine isopeptide (Gln-Lys) (interchain with K-? in acceptor proteins).

The protein belongs to the prokaryotic ubiquitin-like protein family. In terms of assembly, strongly interacts with the proteasome-associated ATPase ARC through a hydrophobic interface; the interacting region of Pup lies in its C-terminal half. There is one Pup binding site per ARC hexamer ring. In terms of processing, is modified by deamidation of its C-terminal glutamine to glutamate by the deamidase Dop, a prerequisite to the subsequent pupylation process.

It functions in the pathway protein degradation; proteasomal Pup-dependent pathway. In terms of biological role, protein modifier that is covalently attached to lysine residues of substrate proteins, thereby targeting them for proteasomal degradation. The tagging system is termed pupylation. The sequence is that of Prokaryotic ubiquitin-like protein Pup from Arthrobacter sp. (strain FB24).